A 986-amino-acid chain; its full sequence is Resact receptor (986 aa).

The first 21 residues, 1-21 (MATTRLLFLLVVAVMITMVRS), serve as a signal peptide directing secretion. The Extracellular portion of the chain corresponds to 22–507 (ATLHYNPTVI…GELCTNWGLY (486 aa)). N-linked (GlcNAc...) asparagine glycosylation is found at Asn185, Asn361, and Asn410. The chain crosses the membrane as a helical span at residues 508–528 (LGTLIPAFIIIFGGGLGYYIY). Residues 529–986 (RKRAYEAALD…SHSCSALHSS (458 aa)) lie on the Cytoplasmic side of the membrane. The 269-residue stretch at 568 to 836 (LSAISVISNA…PNIIEVRTML (269 aa)) folds into the Protein kinase domain.

Its subcellular location is the membrane. It catalyses the reaction GTP = 3',5'-cyclic GMP + diphosphate. In terms of biological role, implicated as a cell-surface receptor on spermatozoa for 'resact' a chemotactic peptide, and on various other cells as a receptor for atrial natriuretic peptide. The protein is Resact receptor of Arbacia punctulata (Punctuate sea urchin).